The sequence spans 461 residues: MAGLSRILLSCTLACLLAGQAAQASVDDPTRAGGDNRVRALRADQARRDVLLTACRDDPGHRRGEPDCVNAERAQALQQWQAAAMTSVDAAFSDLAGALRNAAPRRMEAAIVRLTRQLQPLVYSMMTLLVLLTGYALLARRDRPFEWHIRHALLVAVVTSLALSPDRYLSTVVAGVQDVAGWLSGPWTAPDGAAGRGGLAQLDQFAAQAQAWVAQLAGQAANDANPGSAVNWLLCAMIVAASAGGWLCLAASLLIVPGLIVTLLLSLGPLFLVLLLFPALQRWTNAWLGALVRALVFMALGTPAVGLLSDVLAGALPAGLPQRFATDPLRSTMLAATLCATATLMLLTLVPLASSVNAGLRRRLWPNAAHPGLAQAHRQAAARQYAPRPAAAAAAAGPHQAGTYAASATPAPARPAPSFPAHAYRQYALGGARRPPPRVRRDDRPAPAPDRRVLPRKPNLP.

The first 24 residues, 1 to 24, serve as a signal peptide directing secretion; sequence MAGLSRILLSCTLACLLAGQAAQA. 5 helical membrane passes run 118–138, 232–252, 253–273, 294–314, and 333–353; these read LQPLVYSMMTLLVLLTGYALL, WLLCAMIVAASAGGWLCLAAS, LLIVPGLIVTLLLSLGPLFLV, ALVFMALGTPAVGLLSDVLAG, and MLAATLCATATLMLLTLVPLA. The segment covering 376–411 has biased composition (low complexity); that stretch reads AHRQAAARQYAPRPAAAAAAAGPHQAGTYAASATPA. The disordered stretch occupies residues 376–461; it reads AHRQAAARQY…RVLPRKPNLP (86 aa). Basic and acidic residues predominate over residues 439–453; it reads VRRDDRPAPAPDRRV.

Its subcellular location is the cell membrane. The chain is Type IV secretion system protein PtlD homolog (ptlD) from Bordetella bronchiseptica (strain ATCC BAA-588 / NCTC 13252 / RB50) (Alcaligenes bronchisepticus).